The sequence spans 549 residues: Chaperonin GroEL (549 aa).

Residues 29–32 (TAGP), Lys50, 86–90 (DGTTT), Gly418, and Asp499 each bind ATP.

It belongs to the chaperonin (HSP60) family. In terms of assembly, forms a cylinder of 14 subunits composed of two heptameric rings stacked back-to-back. Interacts with the co-chaperonin GroES.

Its subcellular location is the cytoplasm. It carries out the reaction ATP + H2O + a folded polypeptide = ADP + phosphate + an unfolded polypeptide.. Together with its co-chaperonin GroES, plays an essential role in assisting protein folding. The GroEL-GroES system forms a nano-cage that allows encapsulation of the non-native substrate proteins and provides a physical environment optimized to promote and accelerate protein folding. In Wolbachia pipientis wMel, this protein is Chaperonin GroEL.